The following is a 926-amino-acid chain: MKKTRSTTLRRAWPSSDFSDRASDRMRSRSEKDYRLHKRFPAAFAPQASRGYMTSGDVSPISMSPISQSQFIPLGEILCLAISAMNSARKPVTQEALMEHLTTCFPGVPTPSQEILRHTLNTLVRERKIYPTPDGYFIVTPQTYFITPSLIRTNSKWYHLDERVPDRSQCTSPQPGTITPSASGCVRERTLPRKHCDSCHCCREDVHSMHASTLQRKSAKDCKDPYCPPPLCQVPPTEKSKSTINFSYKTETLSKPKDGEKQSKKFGLKLFRLSFKKDKTKQLANFSAQFPPEEWPLRDEDTPTTIPREVEMEIIRRINPDLTVENVMRHTALMKKLEEEKAHRSKAGSSAHHSGRSKKSRTHRKSHGKSRSHSKTRVSKGDPSDGSHLDIPGEREYEFCDPLTRAPREGCFIIEHKGDNFIMHSNTNVIESHFPMTPEWDVSGELAKRRTEMPFPEPSRGSSHSKVHRSHSHTQDRRSRNERSNKAKERSRSMDNSKGPLGASSLGTPEDLAEGCSQDDQTPSQSYIDDSTLRPAQTIGHQRAHIPSASYKEVCIPEIVGGSKEPSSACSLLEPGKTPESMPSYGELSPCPAKTAVDDYFQCNTSSETVLTAPSPLGKNKEDHDTLTLVEGVKKLSPSERQTPHSSREPVGHKEESPKGPGGGPAASGGVAEGLANGRLVQHHSAEPSSLDKRKEIFSKDTLFKPLHSTLSVNSYHKSSLSLLKSHPKSPVDTLPGRCEKLEPSLGTSAAQAMPPSQRQQEPGGNQEASFDYYNVSDDDDSEEGANKNAEEEKNRDDVGTMQWLLEREKERDLQRKFEKNLTLLTPKETDSSSNQRATHSARLDSMDSSSITVDSGFNSPRTRESLASNTSSIVESNRRQNPALSPAHGGAGPTFNFRASTDPPTSEAEKLQKPSNCLQASVTSV.

Disordered regions lie at residues 1-32, 338-393, 452-529, 564-586, 633-693, 723-802, and 823-926; these read MKKT…RSEK, EEEK…DIPG, EMPF…SYID, KEPS…PSYG, VKKL…SLDK, LLKS…VGTM, and TLLT…VTSV. Basic and acidic residues predominate over residues 18-32; it reads FSDRASDRMRSRSEK. A compositionally biased stretch (basic residues) spans 353–378; sequence HSGRSKKSRTHRKSHGKSRSHSKTRV. Positions 379-393 are enriched in basic and acidic residues; that stretch reads SKGDPSDGSHLDIPG. Residues 463–472 show a composition bias toward basic residues; the sequence is SHSKVHRSHS. The span at 473–495 shows a compositional bias: basic and acidic residues; the sequence is HTQDRRSRNERSNKAKERSRSMD. Polar residues predominate over residues 518-529; that stretch reads QDDQTPSQSYID. 2 stretches are compositionally biased toward basic and acidic residues: residues 633 to 658 and 684 to 693; these read VKKL…EESP and HSAEPSSLDK. Positions 746–769 are enriched in polar residues; that stretch reads LGTSAAQAMPPSQRQQEPGGNQEA. Positions 785–799 are enriched in basic and acidic residues; sequence GANKNAEEEKNRDDV. Polar residues-rich tracts occupy residues 847–884 and 914–926; these read MDSS…QNPA and KPSN…VTSV.

In Mus musculus (Mouse), this protein is Storkhead-box protein 2 (Stox2).